A 258-amino-acid polypeptide reads, in one-letter code: Snake venom serine protease BPA (258 aa).

The signal sequence occupies residues 1-18 (MVLIRVIANLLILQLSNA). Positions 19–24 (QKSSEL) are excised as a propeptide. One can recognise a Peptidase S1 domain in the interval 25 to 249 (VIGGDECNIT…YLPWIQSIIA (225 aa)). Cystine bridges form between Cys-31–Cys-163, Cys-50–Cys-66, Cys-98–Cys-256, Cys-142–Cys-210, Cys-174–Cys-189, and Cys-200–Cys-225. 2 N-linked (GlcNAc...) asparagine glycosylation sites follow: Asn-32 and Asn-44. The active-site Charge relay system is His-65. An N-linked (GlcNAc...) asparagine glycan is attached at Asn-103. Catalysis depends on Asp-110, which acts as the Charge relay system. Residue Asn-121 is glycosylated (N-linked (GlcNAc...) asparagine). Ser-133 carries O-linked (GalNAc...) serine glycosylation. Asn-154 and Asn-170 each carry an N-linked (GlcNAc...) asparagine glycan. The active-site Charge relay system is Ser-204. 2 N-linked (GlcNAc...) asparagine glycosylation sites follow: Asn-211 and Asn-251. O-linked (GalNAc...) threonine glycosylation is present at Thr-255.

This sequence belongs to the peptidase S1 family. Snake venom subfamily. Monomer. Post-translationally, N- and O-glycosylated. The glycosylation has a stabilizing effect on the protein. However, the removal of part of the carbohydrates enhances the proteolytic activity of the SVSP towards human and rat fibrinogen. As to expression, expressed by the venom gland.

It localises to the secreted. Inhibited by diisopropylfluorophosphate (DFP), but not by SBTI, Antithrombin III/heparin and BPTI, probably due to steric hindrance caused by its huge carbohydrate moietie. In terms of biological role, snake venom serine protease that has a potent and selective fibrinogenolytic activity. Preferentially cleaves the alpha-chain (FGA) of human and rat fibrinogen at Arg-|-Gly bonds, and slowly digests the beta-chain (FGB). In vivo, completely avoids thrombus formation induced in rat, decreases the fibrinogen plasma level and prolonges the recalcification time. Possesses esterolytic and amidolytic activities. The chain is Snake venom serine protease BPA from Bothrops jararaca (Jararaca).